A 58-amino-acid chain; its full sequence is Large ribosomal subunit protein bL32 (58 aa).

It belongs to the bacterial ribosomal protein bL32 family.

The chain is Large ribosomal subunit protein bL32 from Thermobifida fusca (strain YX).